Reading from the N-terminus, the 594-residue chain is (E)-beta-ocimene synthase TPS6FN (594 aa).

Residues Arg303, Asp340, Asp344, Arg489, and Asn492 each coordinate (2E)-geranyl diphosphate. 2 residues coordinate Mg(2+): Asp340 and Asp344. A DDXXD motif motif is present at residues 340 to 344 (DDIYD). Residues Asn492, Thr496, and Glu500 each coordinate Mg(2+).

It belongs to the terpene synthase family. Tpsb subfamily. Requires Mg(2+) as cofactor. Mn(2+) serves as cofactor. As to expression, expressed in glandular trichomes two to four weeks after flowering onset.

The enzyme catalyses (2E)-geranyl diphosphate = (E)-beta-ocimene + diphosphate. The catalysed reaction is (2E)-geranyl diphosphate = (Z)-beta-ocimene + diphosphate. It participates in secondary metabolite biosynthesis; terpenoid biosynthesis. Functionally, involved in monoterpene (C10) olefins biosynthesis, constituants of cannabinoids and terpenoids-rich resins. Catalyzes mainly the conversion of (2E)-geranyl diphosphate to (E)-beta-ocimene, and also produces minor products such as (Z)-beta-ocimene. The chain is (E)-beta-ocimene synthase TPS6FN from Cannabis sativa (Hemp).